A 125-amino-acid polypeptide reads, in one-letter code: Small ribosomal subunit protein eS6 (125 aa).

The tract at residues 90-109 (KGPGFRPKEKGERRKKTVRG) is disordered.

It belongs to the eukaryotic ribosomal protein eS6 family. As to quaternary structure, part of the 30S ribosomal subunit.

This is Small ribosomal subunit protein eS6 from Pyrococcus furiosus (strain ATCC 43587 / DSM 3638 / JCM 8422 / Vc1).